A 306-amino-acid polypeptide reads, in one-letter code: MSNEFINFEKISRESWKTLHQKAKALLTQEELKSITSLNDNISINDVIDIYLPLINLIQVYKIAQENLSFSKSLFLKKDIQLRPFIIGISGSVAVGKSTTSRLLQLLLSRTHPNSQVELVTTDGFLYPNQFLIEQGLLNRKGFPESYNMELLLDFLDSIKNGQTAFAPVYSHDIYDIIPNQKQSFNNPDFLIVEGINVFQNQQNNRLYMSDYFDFSIYIDADSSHIETWYIERFLSILKLAKRDPHNYYAQYAQLPRSEAIAFARNVWKNVNLENLEKFIEPTRNRAELILHKSADHKIDEIYLKK.

Position 91-98 (91-98 (GSVAVGKS)) interacts with ATP.

This sequence belongs to the prokaryotic pantothenate kinase family.

It localises to the cytoplasm. It carries out the reaction (R)-pantothenate + ATP = (R)-4'-phosphopantothenate + ADP + H(+). The protein operates within cofactor biosynthesis; coenzyme A biosynthesis; CoA from (R)-pantothenate: step 1/5. This chain is Pantothenate kinase, found in Streptococcus pyogenes serotype M5 (strain Manfredo).